Here is a 145-residue protein sequence, read N- to C-terminus: Putative phosphatidylglycerol/phosphatidylinositol transfer protein DDB_G0282179 (145 aa).

Positions 1-20 (MIKTILLLLINFMLILIVNG) are cleaved as a signal peptide. Residue asparagine 134 is glycosylated (N-linked (GlcNAc...) asparagine).

The protein belongs to the NPC2 family. Monomer.

In terms of biological role, catalyzes the intermembrane transfer of phosphatidylglycerol and phosphatidylinositol. The polypeptide is Putative phosphatidylglycerol/phosphatidylinositol transfer protein DDB_G0282179 (Dictyostelium discoideum (Social amoeba)).